Reading from the N-terminus, the 71-residue chain is SRY-related protein LG27 (71 aa).

The HMG box DNA-binding region spans 1–68 (VKRPMNAFMV…KHMADYPNYK (68 aa)).

It is found in the nucleus. In Eublepharis macularius (Leopard gecko), this protein is SRY-related protein LG27.